A 375-amino-acid chain; its full sequence is Dual-specificity RNA methyltransferase RlmN (375 aa).

Catalysis depends on E93, which acts as the Proton acceptor. A Radical SAM core domain is found at 99–346; the sequence is ETNRGTLCVS…TTTRKTRGDD (248 aa). C106 and C351 form a disulfide bridge. 3 residues coordinate [4Fe-4S] cluster: C113, C117, and C120. Residues 177 to 178, S209, 231 to 233, and N308 each bind S-adenosyl-L-methionine; these read GE and SLH. The active-site S-methylcysteine intermediate is C351.

This sequence belongs to the radical SAM superfamily. RlmN family. [4Fe-4S] cluster is required as a cofactor.

Its subcellular location is the cytoplasm. The catalysed reaction is adenosine(2503) in 23S rRNA + 2 reduced [2Fe-2S]-[ferredoxin] + 2 S-adenosyl-L-methionine = 2-methyladenosine(2503) in 23S rRNA + 5'-deoxyadenosine + L-methionine + 2 oxidized [2Fe-2S]-[ferredoxin] + S-adenosyl-L-homocysteine. It catalyses the reaction adenosine(37) in tRNA + 2 reduced [2Fe-2S]-[ferredoxin] + 2 S-adenosyl-L-methionine = 2-methyladenosine(37) in tRNA + 5'-deoxyadenosine + L-methionine + 2 oxidized [2Fe-2S]-[ferredoxin] + S-adenosyl-L-homocysteine. In terms of biological role, specifically methylates position 2 of adenine 2503 in 23S rRNA and position 2 of adenine 37 in tRNAs. m2A2503 modification seems to play a crucial role in the proofreading step occurring at the peptidyl transferase center and thus would serve to optimize ribosomal fidelity. The chain is Dual-specificity RNA methyltransferase RlmN from Azoarcus sp. (strain BH72).